Here is a 483-residue protein sequence, read N- to C-terminus: Glutamyl-tRNA(Gln) amidotransferase subunit A (483 aa).

Residues Lys77 and Ser152 each act as charge relay system in the active site. The Acyl-ester intermediate role is filled by Ser176.

It belongs to the amidase family. GatA subfamily. Heterotrimer of A, B and C subunits.

It catalyses the reaction L-glutamyl-tRNA(Gln) + L-glutamine + ATP + H2O = L-glutaminyl-tRNA(Gln) + L-glutamate + ADP + phosphate + H(+). Its function is as follows. Allows the formation of correctly charged Gln-tRNA(Gln) through the transamidation of misacylated Glu-tRNA(Gln) in organisms which lack glutaminyl-tRNA synthetase. The reaction takes place in the presence of glutamine and ATP through an activated gamma-phospho-Glu-tRNA(Gln). The sequence is that of Glutamyl-tRNA(Gln) amidotransferase subunit A from Listeria monocytogenes serotype 4a (strain HCC23).